Consider the following 734-residue polypeptide: Platelet glycoprotein Ib alpha chain (734 aa).

The signal sequence occupies residues 1–16 (MALLILLFLLPSPLHS). One can recognise an LRRNT domain in the interval 17 to 47 (QHTCSISKVTSLLEVNCENKKLTALPADLPA). Residues 17-612 (QHTCSISKVT…LNSDFCCFLP (596 aa)) are Extracellular-facing. The cysteines at positions 20 and 33 are disulfide-linked. LRR repeat units follow at residues 48-69 (DTGI…SLVH), 72-93 (HLTY…GKLI), 94-115 (KLEN…GWAL), 117-140 (ALTT…DGLS), 141-162 (QLQE…LLLP), 165-188 (KLKK…DGLE), and 189-210 (DLDT…FFGT). The 62-residue stretch at 221-282 (NSWYCDCEIL…YSYPGKGCPT (62 aa)) folds into the LRRCT domain. Intrachain disulfides connect cysteine 225–cysteine 264 and cysteine 227–cysteine 280. Position 292 is a sulfotyrosine (tyrosine 292). Residues threonine 301, threonine 311, threonine 315, and threonine 316 are each glycosylated (O-linked (GalNAc...) threonine). An O-linked (GalNAc...) serine glycan is attached at serine 335. 4 O-linked (GalNAc...) threonine glycosylation sites follow: threonine 339, threonine 348, threonine 358, and threonine 377. Serine 382 carries O-linked (GalNAc...) serine glycosylation. 3 O-linked (GalNAc...) threonine glycosylation sites follow: threonine 384, threonine 385, and threonine 405. Disordered stretches follow at residues 406 to 429 (STLT…TPEH) and 460 to 526 (EPST…PEPS). Residues threonine 512, threonine 516, threonine 519, threonine 530, threonine 542, threonine 546, threonine 550, and threonine 562 are each glycosylated (O-linked (GalNAc...) threonine). An O-linked (GalNAc...) serine glycan is attached at serine 572. Residue threonine 573 is glycosylated (O-linked (GalNAc...) threonine). A helical transmembrane segment spans residues 613 to 633 (LGFYVLGLLWLLFASVVLILL). Residues 634–734 (LTWTWHVTPH…VGIRYSGHSL (101 aa)) lie on the Cytoplasmic side of the membrane. A phosphoserine mark is found at serine 711 and serine 714.

In terms of assembly, two GP-Ib beta are disulfide-linked to one GP-Ib alpha. GP-IX is complexed with the GP-Ib heterodimer via a non covalent linkage. Interacts with FLNB. Interacts with FLNA (via filamin repeats 4, 9, 12, 17, 19, 21, and 23). Post-translationally, O-glycosylated. In terms of processing, glycocalicin is the product of a proteolytic cleavage/shedding, catalyzed by ADAM17, which releases most of the extracellular domain. Binding sites for vWF and thrombin are in this part of the protein.

The protein resides in the membrane. Functionally, GP-Ib, a surface membrane protein of platelets, participates in the formation of platelet plugs by binding to the A1 domain of vWF, which is already bound to the subendothelium. The chain is Platelet glycoprotein Ib alpha chain (Gp1ba) from Mus musculus (Mouse).